The primary structure comprises 880 residues: Valine--tRNA ligase (880 aa).

Positions 49 to 59 (PNVTGKLHLGH) match the 'HIGH' region motif. Residues 525–529 (KMSKS) carry the 'KMSKS' region motif. Lys-528 is a binding site for ATP. Residues 809–879 (LAGLLDLEEE…AVRARIKELK (71 aa)) are a coiled coil.

It belongs to the class-I aminoacyl-tRNA synthetase family. ValS type 1 subfamily. Monomer.

The protein resides in the cytoplasm. The enzyme catalyses tRNA(Val) + L-valine + ATP = L-valyl-tRNA(Val) + AMP + diphosphate. Catalyzes the attachment of valine to tRNA(Val). As ValRS can inadvertently accommodate and process structurally similar amino acids such as threonine, to avoid such errors, it has a 'posttransfer' editing activity that hydrolyzes mischarged Thr-tRNA(Val) in a tRNA-dependent manner. The protein is Valine--tRNA ligase of Halalkalibacterium halodurans (strain ATCC BAA-125 / DSM 18197 / FERM 7344 / JCM 9153 / C-125) (Bacillus halodurans).